A 66-amino-acid polypeptide reads, in one-letter code: Small ribosomal subunit protein bS21B (66 aa).

Positions Tyr38–Tyr66 are disordered.

This sequence belongs to the bacterial ribosomal protein bS21 family.

This chain is Small ribosomal subunit protein bS21B, found in Francisella tularensis subsp. tularensis (strain SCHU S4 / Schu 4).